Here is a 668-residue protein sequence, read N- to C-terminus: Protein PLASTID TRANSCRIPTIONALLY ACTIVE 10 (668 aa).

The transit peptide at 1–40 directs the protein to the chloroplast; it reads MQICQTKLNFTFPNPTNPNFCKPKALQWSPPRRISLLPCR. Residues 272-340 form the S1 motif domain; that stretch reads GMVCEGTVTT…YRFRFPLELR (69 aa). Residues 362-391 show a composition bias toward basic and acidic residues; that stretch reads RDGDTNPDEIRRDCGRPPEPRKDPGSKPEE. The interval 362-394 is disordered; the sequence is RDGDTNPDEIRRDCGRPPEPRKDPGSKPEEEGL. Ser434 carries the post-translational modification Phosphoserine. The segment at 611–668 is disordered; that stretch reads KRKEGSTLASQEEETESEEEEEDDDDFDDFDYSILSDESSIGYSEQQPLVNGTQVLTD. Residues 621–641 are compositionally biased toward acidic residues; it reads QEEETESEEEEEDDDDFDDFD. Over residues 646–668 the composition is skewed to polar residues; that stretch reads SDESSIGYSEQQPLVNGTQVLTD.

In terms of assembly, component of the transcriptionally active chromosome (TAC) complexes. Interacts with PTAC7.

The protein resides in the plastid. The protein localises to the chloroplast. In Arabidopsis thaliana (Mouse-ear cress), this protein is Protein PLASTID TRANSCRIPTIONALLY ACTIVE 10.